The sequence spans 638 residues: Keratin, type II cytoskeletal 2 oral (638 aa).

A head region spans residues 1-182 (MNRQVCKKSF…DPQIGQVKAQ (182 aa)). 2 positions are modified to omega-N-methylarginine: arginine 85 and arginine 110. A coil 1A region spans residues 183–218 (EREQIKTLNNKFASFIDKVRFLEQQNKVLETKWELL). One can recognise an IF rod domain in the interval 183 to 496 (EREQIKTLNN…KLLEGEECRM (314 aa)). Residues 219–237 (QQQTTGSGPSSLEPCFESY) are linker 1. Positions 238–329 (ISFLCKQLDS…TLYEMELSQM (92 aa)) are coil 1B. The segment at 330–353 (QSHASDTSVVLSMDNNRCLDLGSI) is linker 12. The interval 354-492 (IAEVRAQYEE…ATYRKLLEGE (139 aa)) is coil 2. A tail region spans residues 493 to 638 (ECRMSGECQS…TSSSQHSSTK (146 aa)). The segment at 532–638 (SGSGGYKGGS…TSSSQHSSTK (107 aa)) is disordered. Positions 540 to 549 (GSSSSSSSGY) are enriched in low complexity. Gly residues predominate over residues 550-572 (GVSGGSGSGYGGVSSGSTGGRGS). Residues 573–583 (SGSYQSSSSGS) show a composition bias toward low complexity. Arginine 584 bears the Omega-N-methylarginine mark. A compositionally biased stretch (low complexity) spans 590–608 (SISVSHSGMGSSSGSIQTS). A compositionally biased stretch (gly residues) spans 609–620 (GGSGYKSGGGGS). Residues 626–638 (SQTTSSSQHSSTK) show a composition bias toward low complexity.

Belongs to the intermediate filament family. In terms of assembly, heterotetramer of two type I and two type II keratins.

Its function is as follows. Probably contributes to terminal cornification. The chain is Keratin, type II cytoskeletal 2 oral (KRT76) from Homo sapiens (Human).